The primary structure comprises 177 residues: Ribulose bisphosphate carboxylase small subunit, chloroplastic 2 (177 aa).

The transit peptide at 1 to 56 (MASSMMASTAAVARAGPAQSNMVAPFNGLRSSVAFPATRKANKNLSTLPSNGGKVS) directs the protein to the chloroplast.

This sequence belongs to the RuBisCO small chain family. As to quaternary structure, heterohexadecamer of 8 large and 8 small subunits.

Its subcellular location is the plastid. The protein resides in the chloroplast. Its function is as follows. RuBisCO catalyzes two reactions: the carboxylation of D-ribulose 1,5-bisphosphate, the primary event in carbon dioxide fixation, as well as the oxidative fragmentation of the pentose substrate. Both reactions occur simultaneously and in competition at the same active site. Although the small subunit is not catalytic it is essential for maximal activity. In Lemna gibba (Swollen duckweed), this protein is Ribulose bisphosphate carboxylase small subunit, chloroplastic 2.